The following is a 1407-amino-acid chain: DNA-directed RNA polymerase subunit beta' (1407 aa).

Zn(2+) contacts are provided by cysteine 70, cysteine 72, cysteine 85, and cysteine 88. Aspartate 460, aspartate 462, and aspartate 464 together coordinate Mg(2+). Zn(2+)-binding residues include cysteine 814, cysteine 888, cysteine 895, and cysteine 898.

Belongs to the RNA polymerase beta' chain family. As to quaternary structure, the RNAP catalytic core consists of 2 alpha, 1 beta, 1 beta' and 1 omega subunit. When a sigma factor is associated with the core the holoenzyme is formed, which can initiate transcription. Mg(2+) serves as cofactor. Zn(2+) is required as a cofactor.

The enzyme catalyses RNA(n) + a ribonucleoside 5'-triphosphate = RNA(n+1) + diphosphate. Its function is as follows. DNA-dependent RNA polymerase catalyzes the transcription of DNA into RNA using the four ribonucleoside triphosphates as substrates. This chain is DNA-directed RNA polymerase subunit beta', found in Salmonella paratyphi A (strain ATCC 9150 / SARB42).